The chain runs to 917 residues: Calcium-activated chloride channel regulator 1 (917 aa).

A signal peptide spans 1–21 (MGSFRSSLFILVLHLLEGAQS). The metalloprotease domain stretch occupies residues 46–199 (DERLIQNIKD…AIRGTNVLPQ (154 aa)). Residue H156 coordinates Zn(2+). Residue E157 is part of the active site. H160 and N167 together coordinate Zn(2+). The region spanning 306–475 (IVCLVLDKSG…NGLIDAFGAL (170 aa)) is the VWFA domain. N503, N772, N806, N812, N838, and N893 each carry an N-linked (GlcNAc...) asparagine glycan.

The protein belongs to the CLCR family. Post-translationally, glycosylated. In terms of processing, the translation product is autoproteolytically cleaved by the metalloprotease domain in the endoplasmic reticulum into a N-terminal and a C-terminal products that remain physically associated with each other. The cleavage is necessary for calcium-activated chloride channel (CaCC) activation activity. Expressed in ileum, trachea, and the major salivary glands. In ileum, expressed to the crypt and villus epithelia, whereas in trachea expressed in both surface epithelium and submucosal glands.

It is found in the secreted. The protein localises to the extracellular space. Its function is as follows. May be involved in mediating calcium-activated chloride conductance. May play critical roles in goblet cell metaplasia, mucus hypersecretion, cystic fibrosis and AHR. May be involved in the regulation of mucus production and/or secretion by goblet cells. Involved in the regulation of tissue inflammation in the innate immune response. May play a role as a tumor suppressor. Induces MUC5AC. Induces a cAMP-dependent chloride conductance possibly through effects on CFTR in colon carcinoma cells. The protein is Calcium-activated chloride channel regulator 1 (CLCA1) of Sus scrofa (Pig).